Here is a 457-residue protein sequence, read N- to C-terminus: tRNA modification GTPase MnmE (457 aa).

Arg22, Glu83, and Arg122 together coordinate (6S)-5-formyl-5,6,7,8-tetrahydrofolate. The TrmE-type G domain occupies 219-378 (GLATAIIGRP…LEEAIKALFF (160 aa)). Asn229 serves as a coordination point for K(+). Residues 229-234 (NVGKSS), 248-254 (TDIAGTT), and 273-276 (DTAG) each bind GTP. Ser233 is a binding site for Mg(2+). Thr248, Ile250, and Thr253 together coordinate K(+). A Mg(2+)-binding site is contributed by Thr254. A (6S)-5-formyl-5,6,7,8-tetrahydrofolate-binding site is contributed by Lys457.

This sequence belongs to the TRAFAC class TrmE-Era-EngA-EngB-Septin-like GTPase superfamily. TrmE GTPase family. As to quaternary structure, homodimer. Heterotetramer of two MnmE and two MnmG subunits. Requires K(+) as cofactor.

It localises to the cytoplasm. In terms of biological role, exhibits a very high intrinsic GTPase hydrolysis rate. Involved in the addition of a carboxymethylaminomethyl (cmnm) group at the wobble position (U34) of certain tRNAs, forming tRNA-cmnm(5)s(2)U34. In Listeria innocua serovar 6a (strain ATCC BAA-680 / CLIP 11262), this protein is tRNA modification GTPase MnmE.